Here is a 265-residue protein sequence, read N- to C-terminus: Undecaprenyl-diphosphatase (265 aa).

Transmembrane regions (helical) follow at residues 1-21 (MDWF…FLPI), 39-59 (QGLA…MMYY), 83-103 (LKLG…GFLG), 114-134 (ALVI…SDAF), 144-164 (LGVA…IPGT), 188-208 (SFLL…KDLI), 218-238 (MMAL…VFFI), and 244-264 (VGML…LFWL).

The protein belongs to the UppP family.

It is found in the cell inner membrane. The catalysed reaction is di-trans,octa-cis-undecaprenyl diphosphate + H2O = di-trans,octa-cis-undecaprenyl phosphate + phosphate + H(+). Its function is as follows. Catalyzes the dephosphorylation of undecaprenyl diphosphate (UPP). Confers resistance to bacitracin. The protein is Undecaprenyl-diphosphatase of Alcanivorax borkumensis (strain ATCC 700651 / DSM 11573 / NCIMB 13689 / SK2).